Consider the following 455-residue polypeptide: Anaerobic glycerol-3-phosphate dehydrogenase subunit B (455 aa).

Belongs to the anaerobic G-3-P dehydrogenase subunit B family. Composed of a catalytic GlpA/B dimer and of membrane bound GlpC. FMN serves as cofactor.

The catalysed reaction is a quinone + sn-glycerol 3-phosphate = dihydroxyacetone phosphate + a quinol. Its pathway is polyol metabolism; glycerol degradation via glycerol kinase pathway; glycerone phosphate from sn-glycerol 3-phosphate (anaerobic route): step 1/1. Its function is as follows. Conversion of glycerol 3-phosphate to dihydroxyacetone. Uses fumarate or nitrate as electron acceptor. This Aliivibrio fischeri (strain MJ11) (Vibrio fischeri) protein is Anaerobic glycerol-3-phosphate dehydrogenase subunit B.